A 373-amino-acid polypeptide reads, in one-letter code: Chaperone protein DnaJ (373 aa).

The region spanning 4–68 (NYYQILGVSK…QKRAAYDRLG (65 aa)) is the J domain. Residues 136–214 (GIEKNINFSS…CHGMGRYHKQ (79 aa)) form a CR-type zinc finger. Positions 149, 152, 166, 169, 188, 191, 202, and 205 each coordinate Zn(2+). CXXCXGXG motif repeat units follow at residues 149 to 156 (CNTCHGSG), 166 to 173 (CDACSGVG), 188 to 195 (CHKCQGNG), and 202 to 209 (CKKCHGMG).

The protein belongs to the DnaJ family. Homodimer. Zn(2+) serves as cofactor.

The protein localises to the cytoplasm. In terms of biological role, participates actively in the response to hyperosmotic and heat shock by preventing the aggregation of stress-denatured proteins and by disaggregating proteins, also in an autonomous, DnaK-independent fashion. Unfolded proteins bind initially to DnaJ; upon interaction with the DnaJ-bound protein, DnaK hydrolyzes its bound ATP, resulting in the formation of a stable complex. GrpE releases ADP from DnaK; ATP binding to DnaK triggers the release of the substrate protein, thus completing the reaction cycle. Several rounds of ATP-dependent interactions between DnaJ, DnaK and GrpE are required for fully efficient folding. Also involved, together with DnaK and GrpE, in the DNA replication of plasmids through activation of initiation proteins. This Rickettsia rickettsii (strain Sheila Smith) protein is Chaperone protein DnaJ.